We begin with the raw amino-acid sequence, 96 residues long: Large ribosomal subunit protein eL21 (96 aa).

Belongs to the eukaryotic ribosomal protein eL21 family.

The polypeptide is Large ribosomal subunit protein eL21 (Methanothrix thermoacetophila (strain DSM 6194 / JCM 14653 / NBRC 101360 / PT) (Methanosaeta thermophila)).